The sequence spans 555 residues: Glutamine--tRNA ligase (555 aa).

Residues 34 to 44 carry the 'HIGH' region motif; it reads PEPNGYLHIGH. ATP is bound by residues 35–37 and 41–47; these read EPN and HIGHAKS. Positions 67 and 212 each coordinate L-glutamine. ATP is bound by residues Thr-231, 261–262, and 269–271; these read RL and MSK. The 'KMSKS' region signature appears at 268–272; that stretch reads VMSKR. The interaction with tRNA stretch occupies residues 317-324; that stretch reads TKQDNTIE.

This sequence belongs to the class-I aminoacyl-tRNA synthetase family. Monomer.

It localises to the cytoplasm. The catalysed reaction is tRNA(Gln) + L-glutamine + ATP = L-glutaminyl-tRNA(Gln) + AMP + diphosphate. The protein is Glutamine--tRNA ligase of Salmonella choleraesuis (strain SC-B67).